The chain runs to 576 residues: Probable vesicular glutamate transporter eat-4 (576 aa).

Over 1-69 the chain is Cytoplasmic; that stretch reads MSSWNEAWDR…QTWIGKCRKR (69 aa). The disordered stretch occupies residues 25–46; the sequence is AAASATGAAPPQQMQEEGNENP. Positions 36–46 are enriched in polar residues; sequence QQMQEEGNENP. The chain crosses the membrane as a helical span at residues 70-90; it reads WLLAILANMGFMISFGIRCNF. Over 91–121 the chain is Extracellular; it reads GAAKTHMYKNYTDPYGKVHMHEFNWTIDELS. Residues asparagine 100 and asparagine 114 are each glycosylated (N-linked (GlcNAc...) asparagine). Residues 122–142 form a helical membrane-spanning segment; sequence VMESSYFYGYLVTQIPAGFLA. Residues 143–150 are Cytoplasmic-facing; that stretch reads AKFPPNKL. The helical transmembrane segment at 151–171 threads the bilayer; the sequence is FGFGIGVGAFLNILLPYGFKV. Topologically, residues 172-174 are extracellular; it reads KSD. Residues 175-195 form a helical membrane-spanning segment; that stretch reads YLVAFIQITQGLVQGVCYPAM. The Cytoplasmic segment spans residues 196–213; that stretch reads HGVWRYWAPPMERSKLAT. The chain crosses the membrane as a helical span at residues 214-234; that stretch reads TAFTGSYAGAVLGLPLSAFLV. Residues 235-239 are Extracellular-facing; that stretch reads SYVSW. The helical transmembrane segment at 240-260 threads the bilayer; sequence AAPFYLYGVCGVIWAILWFCV. The Cytoplasmic portion of the chain corresponds to 261–305; it reads TFEKPAFHPTISQEEKIFIEDAIGHVSNTHPTIRSIPWKAIVTSK. A helical transmembrane segment spans residues 306–325; that stretch reads PVWAIIVANFARSWTFYLLL. Residues 326 to 344 are Extracellular-facing; that stretch reads QNQLTYMKEALGMKIADSG. The helical transmembrane segment at 345–365 threads the bilayer; it reads LLAAIPHLVMGCVVLMGGQLA. Residues 366–381 are Cytoplasmic-facing; sequence DYLRSNKILSTTAVRK. Residues 382–402 form a helical membrane-spanning segment; the sequence is IFNCGGFGGEAAFMLIVAYTT. The Extracellular portion of the chain corresponds to 403-406; the sequence is SDTT. The helical transmembrane segment at 407–427 threads the bilayer; it reads AIMALIAAVGMSGFAISGFNV. Residues 428–437 are Cytoplasmic-facing; sequence NHLDIAPRYA. The helical transmembrane segment at 438 to 458 threads the bilayer; that stretch reads AILMGFSNGIGTLAGLTCPFV. The Extracellular segment spans residues 459–471; it reads TEAFTAHSKHGWT. A helical membrane pass occupies residues 472 to 492; the sequence is SVFLLASLIHFTGVTFYAVYA. At 493–576 the chain is on the cytoplasmic side; that stretch reads SGELQEWAEP…VVENPHYQQW (84 aa).

The protein belongs to the major facilitator superfamily. Sodium/anion cotransporter family. VGLUT subfamily. As to expression, expressed in neurons of the pharynx and the extrapharyngeal nervous system. Highly expressed in male PHC sensory neurons.

The protein localises to the cell membrane. The protein resides in the synapse. Functionally, required for glutamatergic synaptic transmission. In AWB and AWC sensory neurons, required for the detection of preferred food sources, probably via glutamatergic neurotransmission from sensory neurons. Negatively regulates the turning step of male mating behavior. The protein is Probable vesicular glutamate transporter eat-4 of Caenorhabditis elegans.